The chain runs to 183 residues: Ribosomal RNA small subunit methyltransferase G (183 aa).

S-adenosyl-L-methionine contacts are provided by residues Gly60, Phe65, 111 to 112 (IE), and Arg125.

Belongs to the methyltransferase superfamily. RNA methyltransferase RsmG family.

It localises to the cytoplasm. The catalysed reaction is guanosine(527) in 16S rRNA + S-adenosyl-L-methionine = N(7)-methylguanosine(527) in 16S rRNA + S-adenosyl-L-homocysteine. Its function is as follows. Specifically methylates the N7 position of guanine in position 527 of 16S rRNA. The polypeptide is Ribosomal RNA small subunit methyltransferase G (Campylobacter hominis (strain ATCC BAA-381 / DSM 21671 / CCUG 45161 / LMG 19568 / NCTC 13146 / CH001A)).